The chain runs to 82 residues: ATP synthase subunit c (82 aa).

Helical transmembrane passes span 7–27 and 57–77; these read AASVVAAGLAVGLAAIGPGIG and LAFMESLTIYGLVVALVLLFA.

The protein belongs to the ATPase C chain family. F-type ATPases have 2 components, F(1) - the catalytic core - and F(0) - the membrane proton channel. F(1) has five subunits: alpha(3), beta(3), gamma(1), delta(1), epsilon(1). F(0) has four main subunits: a(1), b(1), b'(1) and c(10-14). The alpha and beta chains form an alternating ring which encloses part of the gamma chain. F(1) is attached to F(0) by a central stalk formed by the gamma and epsilon chains, while a peripheral stalk is formed by the delta, b and b' chains.

The protein localises to the cellular thylakoid membrane. Functionally, f(1)F(0) ATP synthase produces ATP from ADP in the presence of a proton or sodium gradient. F-type ATPases consist of two structural domains, F(1) containing the extramembraneous catalytic core and F(0) containing the membrane proton channel, linked together by a central stalk and a peripheral stalk. During catalysis, ATP synthesis in the catalytic domain of F(1) is coupled via a rotary mechanism of the central stalk subunits to proton translocation. Its function is as follows. Key component of the F(0) channel; it plays a direct role in translocation across the membrane. A homomeric c-ring of between 10-14 subunits forms the central stalk rotor element with the F(1) delta and epsilon subunits. The sequence is that of ATP synthase subunit c from Synechococcus sp. (strain RCC307).